We begin with the raw amino-acid sequence, 348 residues long: Protein pelota homolog (348 aa).

Belongs to the eukaryotic release factor 1 family. Pelota subfamily. Monomer. It depends on a divalent metal cation as a cofactor.

It is found in the cytoplasm. Its function is as follows. May function in recognizing stalled ribosomes, interact with stem-loop structures in stalled mRNA molecules, and effect endonucleolytic cleavage of the mRNA. May play a role in the release non-functional ribosomes and degradation of damaged mRNAs. Has endoribonuclease activity. This Methanococcus maripaludis (strain C6 / ATCC BAA-1332) protein is Protein pelota homolog.